We begin with the raw amino-acid sequence, 310 residues long: Junctional adhesion molecule C (310 aa).

The signal sequence occupies residues 1–29 (MALSRRLRLRLYARLPDFFLLLLFRGCMI). Topologically, residues 30–241 (EAVNLKSSNR…GQDMEVYDLN (212 aa)) are extracellular. One can recognise an Ig-like V-type domain in the interval 35-127 (KSSNRNPVVH…VALNDRKEVD (93 aa)). 2 cysteine pairs are disulfide-bonded: Cys53/Cys115 and Cys160/Cys219. N-linked (GlcNAc...) asparagine glycans are attached at residues Asn104 and Asn192. The region spanning 139–236 (PVTPVCRIPA…AARCEGQDME (98 aa)) is the Ig-like C2-type domain. Residues 242–262 (IAGIIGGVLVVLIVLAVITMG) traverse the membrane as a helical segment. The Cytoplasmic portion of the chain corresponds to 263–310 (ICCAYRRGCFISSKQDGESYKSPGKHDGVNYIRTSEEGDFRHKSSFVI). 2 S-palmitoyl cysteine lipidation sites follow: Cys264 and Cys265.

Belongs to the immunoglobulin superfamily. As to quaternary structure, interacts with ITGAM. Interacts with GORASP2. Post-translationally, proteolytically cleaved from endothelial cells surface into a soluble form by ADAM10 and ADAM17; the release of soluble JAM3 is increased by pro-inflammatory factors. In terms of processing, N-glycosylated. S-palmitoylated by ZDHHC7. S-palmitoylation promotes expression at tight junctions. As to expression, colocalizes with Jam2 near the lumen of seminiferous tubulues. Detected at junctional plaques that correspond to cell-cell contacts between spermatids and Sertoli cells. Detected on endothelial cells, in brain vessels and kidney glomeruli (at protein level). Detected in heart, lung, liver, kidney, testis, thymus, lymph node and Peyer patch. Endothelial cells.

Its subcellular location is the cell membrane. It is found in the cell junction. The protein resides in the desmosome. The protein localises to the tight junction. It localises to the secreted. Junctional adhesion protein that mediates heterotypic cell-cell interactions with its cognate receptor JAM2 to regulate different cellular processes. Plays a role in homing and mobilization of hematopoietic stem and progenitor cells within the bone marrow. At the surface of bone marrow stromal cells, it contributes to the retention of the hematopoietic stem and progenitor cells expressing JAM3. Plays a central role in leukocytes extravasation by facilitating transmigration through the endothelium. Plays a role in spermatogenesis where JAM2 and JAM3, which are respectively expressed by Sertoli and germ cells, mediate an interaction between both cell types and play an essential role in the anchorage of germ cells onto Sertoli cells and the assembly of cell polarity complexes during spermatid differentiation. Also functions as a counter-receptor for ITGAM, mediating leukocyte-platelet interactions and is involved in the regulation of transepithelial migration of polymorphonuclear neutrophils (PMN). Plays a role in angiogenesis. Plays a role in the regulation of cell migration. During myogenesis, it is involved in myocyte fusion. In terms of biological role, promotes chemotaxis of vascular endothelial cells and stimulates angiogenesis. The chain is Junctional adhesion molecule C (Jam3) from Mus musculus (Mouse).